Reading from the N-terminus, the 287-residue chain is uncharacterized protein (287 aa).

The next 10 helical transmembrane spans lie at 7–28 (LLLT…RAAL), 32–54 (AIDA…AVLL), 67–86 (GWRG…YAYV), 91–113 (GTGA…LLRG), 120–139 (ALLG…LPGA), 144–163 (LGGA…YTLL), 170–192 (PLAV…LLAF), 202–224 (GLAY…WYSA), 231–253 (IQGA…LLLG), and 263–280 (ATLA…PRLG). EamA domains follow at residues 15–136 (LAFA…FLLL) and 155–276 (LAWG…LILA).

Its subcellular location is the cell membrane. This is an uncharacterized protein from Pseudomonas aeruginosa (strain ATCC 15692 / DSM 22644 / CIP 104116 / JCM 14847 / LMG 12228 / 1C / PRS 101 / PAO1).